The sequence spans 173 residues: ELTSVAGSGRVDSTPLGSRGVTDLERGSFDVTVDKTNIGPLDYNLRAIKMRSKRSLSRPQAIISNCNGVNGEGPSIMVSGGPDYVTFSIKTSNTVRPAQLTIPARPGYNDVSMIYDGQNLKAKVNDIARSIPLTGKIEMRQAGLLFGACNGYANFRGEVDDFEMYECIPPFWG.

Residues E1–D23 are disordered.

In terms of tissue distribution, component of the acid-insoluble and acid-soluble organic matrix of calcified layers of the shell (at protein level).

The protein resides in the secreted. This is an uncharacterized protein from Lottia gigantea (Giant owl limpet).